The following is a 413-amino-acid chain: Multidrug resistance protein MdtA (413 aa).

Positions 1–20 are cleaved as a signal peptide; the sequence is MKGSNTFRWAIAIGVVVAAA. 2 disordered regions span residues 31-57 and 392-413; these read SPTA…RDGP and PQTT…GARA. Residues 397–413 are compositionally biased toward basic and acidic residues; sequence ADEKSPSRHEGQKGARA.

Belongs to the membrane fusion protein (MFP) (TC 8.A.1) family. In terms of assembly, part of a tripartite efflux system composed of MdtA, MdtB and MdtC.

It is found in the cell inner membrane. The chain is Multidrug resistance protein MdtA from Salmonella heidelberg (strain SL476).